A 548-amino-acid polypeptide reads, in one-letter code: Aromatic ammonia-lyase (548 aa).

Tyr55 serves as the catalytic Proton donor/acceptor. The 5-imidazolinone (Ala-Gly) cross-link spans 144-146; it reads ASG. 2,3-didehydroalanine (Ser) is present on Ser145. Residues Asn200, Gln288, Arg294, Asn324, Lys396, Glu425, and Asn428 each coordinate (E)-cinnamate.

This sequence belongs to the PAL/histidase family. As to quaternary structure, homotetramer. In terms of processing, contains an active site 4-methylidene-imidazol-5-one (MIO), which is formed autocatalytically by cyclization and dehydration of residues Ala-Ser-Gly.

It carries out the reaction L-phenylalanine = (E)-cinnamate + NH4(+). It catalyses the reaction L-tyrosine = (E)-4-coumarate + NH4(+). The enzyme catalyses 3,4-dimethoxy-L-phenylalanine = 3,4-dimethoxy-(E)-cinnamate + NH4(+). It functions in the pathway phenylpropanoid metabolism; trans-cinnamate biosynthesis; trans-cinnamate from L-phenylalanine: step 1/1. In terms of biological role, aromatic ammonia-lyase (AAL) that shows reduced activity to catalyze the non-oxidative ammonia elimination from the canonical AAL substrates L-Phe and L-Tyr, contrasted by its pronounced efficiency towards substrates with electron-donor aromatic substituents such as 3,4-dimethoxy-L-phenylalanine. Is also able to catalyze the reverse reaction in vitro, i.e. the ammonia addition reaction to cinnamate derivatives, producing enantiopure phenylalanine derivatives. Shows no activity with L-His. In Loktanella atrilutea, this protein is Aromatic ammonia-lyase.